The chain runs to 361 residues: Divinyl chlorophyll a/b light-harvesting protein PcbD (361 aa).

A run of 6 helical transmembrane segments spans residues 27-47, 93-113, 140-160, 201-221, 248-268, and 315-335; these read FIAS…GSTL, IVHL…GILF, FILG…VEWA, VMGG…FHIV, AVLS…AFWC, and LTNV…WHAL.

It belongs to the PsbB/PsbC family. IsiA/Pcb subfamily. The antenna complex consists of divinyl chlorophylls (a and b) and divinyl chlorophyll a/b binding proteins and binds more divinyl chlorophyll b than does the antenna complex from high-light-adapted Prochlorococcus. The cofactor is divinyl chlorophyll a. Divinyl chlorophyll b is required as a cofactor.

The protein resides in the cellular thylakoid membrane. Its function is as follows. The antenna complex functions as a light receptor, it captures and delivers excitation energy to photosystems II and I. The Prochlorales pcb genes are not related to higher plant LHCs. This chain is Divinyl chlorophyll a/b light-harvesting protein PcbD (pcbD), found in Prochlorococcus marinus (strain SARG / CCMP1375 / SS120).